A 601-amino-acid polypeptide reads, in one-letter code: Elongation factor 4 (601 aa).

Residues 5 to 187 (SNIRNFSIIA…AIVERLPAPE (183 aa)) enclose the tr-type G domain. Residues 17-22 (DHGKST) and 134-137 (NKID) each bind GTP.

This sequence belongs to the TRAFAC class translation factor GTPase superfamily. Classic translation factor GTPase family. LepA subfamily.

Its subcellular location is the cell inner membrane. It carries out the reaction GTP + H2O = GDP + phosphate + H(+). In terms of biological role, required for accurate and efficient protein synthesis under certain stress conditions. May act as a fidelity factor of the translation reaction, by catalyzing a one-codon backward translocation of tRNAs on improperly translocated ribosomes. Back-translocation proceeds from a post-translocation (POST) complex to a pre-translocation (PRE) complex, thus giving elongation factor G a second chance to translocate the tRNAs correctly. Binds to ribosomes in a GTP-dependent manner. The chain is Elongation factor 4 from Oleidesulfovibrio alaskensis (strain ATCC BAA-1058 / DSM 17464 / G20) (Desulfovibrio alaskensis).